Here is a 267-residue protein sequence, read N- to C-terminus: Thiazole synthase (267 aa).

K107 serves as the catalytic Schiff-base intermediate with DXP. Residues G168, 194–195 (AG), and 216–217 (NT) contribute to the 1-deoxy-D-xylulose 5-phosphate site.

The protein belongs to the ThiG family. As to quaternary structure, homotetramer. Forms heterodimers with either ThiH or ThiS.

It is found in the cytoplasm. The enzyme catalyses [ThiS sulfur-carrier protein]-C-terminal-Gly-aminoethanethioate + 2-iminoacetate + 1-deoxy-D-xylulose 5-phosphate = [ThiS sulfur-carrier protein]-C-terminal Gly-Gly + 2-[(2R,5Z)-2-carboxy-4-methylthiazol-5(2H)-ylidene]ethyl phosphate + 2 H2O + H(+). Its pathway is cofactor biosynthesis; thiamine diphosphate biosynthesis. Functionally, catalyzes the rearrangement of 1-deoxy-D-xylulose 5-phosphate (DXP) to produce the thiazole phosphate moiety of thiamine. Sulfur is provided by the thiocarboxylate moiety of the carrier protein ThiS. In vitro, sulfur can be provided by H(2)S. In Aquifex aeolicus (strain VF5), this protein is Thiazole synthase.